A 270-amino-acid chain; its full sequence is tRNA pseudouridine synthase A (270 aa).

The active-site Nucleophile is the D55. Substrate is bound at residue Y110.

It belongs to the tRNA pseudouridine synthase TruA family.

The catalysed reaction is uridine(38/39/40) in tRNA = pseudouridine(38/39/40) in tRNA. In terms of biological role, formation of pseudouridine at positions 38, 39 and 40 in the anticodon stem and loop of transfer RNAs. The polypeptide is tRNA pseudouridine synthase A (Methanoculleus marisnigri (strain ATCC 35101 / DSM 1498 / JR1)).